A 178-amino-acid chain; its full sequence is MFSKFFSLQKAFAAARRRLLILILVLGMAGYAWGPALAARQIPPVALSPTESITFTEAQLARGKQLFNRACAQCHVGGQTYPNPDVTLKLSDLEGATPPRDNVLAIVDYIKNPVTYDGVESLVEYHPNTQLLSEYPRLRNLTDEDLKLIAGYILVQAKTVPGWGGTKSESHSDLSAYL.

The first 38 residues, 1–38 (MFSKFFSLQKAFAAARRRLLILILVLGMAGYAWGPALA), serve as a signal peptide directing secretion. Heme c contacts are provided by Cys-71, Cys-74, His-75, and His-126.

This sequence belongs to the cytochrome c family. PsbV subfamily. As to quaternary structure, PSII is composed of 1 copy each of membrane proteins PsbA, PsbB, PsbC, PsbD, PsbE, PsbF, PsbH, PsbI, PsbJ, PsbK, PsbL, PsbM, PsbT, PsbX, PsbY, PsbZ, Psb30/Ycf12, peripheral proteins PsbO, CyanoQ (PsbQ), PsbU, PsbV and a large number of cofactors. It forms dimeric complexes. Requires heme c as cofactor.

It is found in the cellular thylakoid membrane. One of the extrinsic, lumenal subunits of photosystem II (PSII). PSII is a light-driven water plastoquinone oxidoreductase, using light energy to abstract electrons from H(2)O, generating a proton gradient subsequently used for ATP formation. The extrinsic proteins stabilize the structure of photosystem II oxygen-evolving complex (OEC), the ion environment of oxygen evolution and protect the OEC against heat-induced inactivation. Low-potential cytochrome c that plays a role in the OEC of PSII. This Synechococcus sp. (strain JA-3-3Ab) (Cyanobacteria bacterium Yellowstone A-Prime) protein is Photosystem II extrinsic protein V.